A 236-amino-acid chain; its full sequence is uncharacterized protein (236 aa).

It localises to the plastid. The protein resides in the chloroplast. This is an uncharacterized protein from Chlorella vulgaris (Green alga).